A 217-amino-acid chain; its full sequence is Formate dehydrogenase, nitrate-inducible, cytochrome b556(Fdn) subunit (217 aa).

Residues 1–11 (MSKSKMIVRTK) are Cytoplasmic-facing. A helical transmembrane segment spans residues 12–36 (FIDRACHWTVVICFFLVALSGISFF). His18 provides a ligand contact to heme b. Residues 37–52 (FPTLQWLTQTFGTPQM) are Periplasmic-facing. Residues 53 to 74 (GRILHPFFGIAIFVALMFMFVR) traverse the membrane as a helical segment. His57 contributes to the heme b binding site. Residues 75–110 (FVHHNIPDKKDIPWLLNIVEVLKGNEHKVADVGKYN) lie on the Cytoplasmic side of the membrane. The helical transmembrane segment at 111 to 134 (AGQKMMFWSIMSMIFVLLVTGVII) threads the bilayer. Residues 135-150 (WRPYFAQYFPMQVVRY) are Periplasmic-facing. The chain crosses the membrane as a helical span at residues 151-175 (SLLIHAAAGIILIHAILIHMYMAFW). Residues His155 and His169 each contribute to the heme b site. A menaquinone is bound at residue His169. Over 176 to 217 (VKGSIKGMIEGKVSRRWAKKHHPRWYREIEKAEAKKESEEGI) the chain is Cytoplasmic.

It belongs to the formate dehydrogenase gamma subunit family. In terms of assembly, trimer of heterotrimers, consisting of subunits alpha, beta and gamma. It depends on heme as a cofactor.

It is found in the cell inner membrane. Functionally, formate dehydrogenase allows the bacterium to use formate as major electron donor during anaerobic respiration, when nitrate is used as electron acceptor. Subunit gamma is the cytochrome b556 component of the formate dehydrogenase-N, and also contains a menaquinone reduction site that receives electrons from the beta subunit (FdnH), through its hemes. Formate dehydrogenase-N is part of a system that generates proton motive force, together with the dissimilatory nitrate reductase (Nar). In Escherichia coli O157:H7, this protein is Formate dehydrogenase, nitrate-inducible, cytochrome b556(Fdn) subunit (fdnI).